A 543-amino-acid chain; its full sequence is Chaperonin GroEL (543 aa).

ATP contacts are provided by residues Thr29–Pro32, Asp86–Thr90, Gly413, Asn476–Ala478, and Asp492.

Belongs to the chaperonin (HSP60) family. Forms a cylinder of 14 subunits composed of two heptameric rings stacked back-to-back. Interacts with the co-chaperonin GroES.

It localises to the cytoplasm. The catalysed reaction is ATP + H2O + a folded polypeptide = ADP + phosphate + an unfolded polypeptide.. Functionally, together with its co-chaperonin GroES, plays an essential role in assisting protein folding. The GroEL-GroES system forms a nano-cage that allows encapsulation of the non-native substrate proteins and provides a physical environment optimized to promote and accelerate protein folding. The polypeptide is Chaperonin GroEL (Streptococcus pyogenes serotype M5 (strain Manfredo)).